A 624-amino-acid chain; its full sequence is D-3-phosphoglycerate dehydrogenase 2, chloroplastic (624 aa).

Residues 1 to 49 constitute a chloroplast transit peptide; that stretch reads MAFSSSCSSVKAVNSRWTSPSPSPSSRFAVLPAFLHRRYATSVKLTAIS. Serine 71 carries the phosphoserine modification. NAD(+) is bound by residues 231–232, aspartate 251, 310–312, and aspartate 336; these read KV and VAR. Arginine 312 is a catalytic residue. Glutamate 341 is an active-site residue. Histidine 360 (proton donor) is an active-site residue. Residue 360–363 coordinates NAD(+); it reads HLGA. In terms of domain architecture, ACT spans 552–624; sequence LILCRQVDQP…AIEEFVFLKL (73 aa).

Belongs to the D-isomer specific 2-hydroxyacid dehydrogenase family. As to expression, ubiquitous, but highly expressed in roots and in dark-grown leaf tissues. Expressed in the vasculature, stigma, anther filaments and shoot apical meristem. Not detected in the root meristem or in embryo.

The protein resides in the plastid. Its subcellular location is the chloroplast. It catalyses the reaction (2R)-3-phosphoglycerate + NAD(+) = 3-phosphooxypyruvate + NADH + H(+). It functions in the pathway amino-acid biosynthesis; L-serine biosynthesis; L-serine from 3-phospho-D-glycerate: step 1/3. Inhibited by 90 uM 3-phosphonooxypyruvate, but not by Ser, Thr, Val, Gly Trp, O-acetyl-L-Ser and Cys. Involved in the plastidial phosphorylated pathway of serine biosynthesis (PPSB). The protein is D-3-phosphoglycerate dehydrogenase 2, chloroplastic (PGDH2) of Arabidopsis thaliana (Mouse-ear cress).